The chain runs to 441 residues: Serine carboxypeptidase-like 1 (441 aa).

An N-terminal signal peptide occupies residues 1–29 (MANKYVSSVLKSLLVLLHLVFLSKQHVDS). 3 cysteine pairs are disulfide-bonded: Cys88-Cys331, Cys252-Cys266, and Cys290-Cys297. An N-linked (GlcNAc...) asparagine glycan is attached at Asn109. Residue Ser184 is part of the active site. Asn350 is a glycosylation site (N-linked (GlcNAc...) asparagine). Residue Asp366 is part of the active site. The N-linked (GlcNAc...) asparagine glycan is linked to Asn382. His419 is an active-site residue.

The protein belongs to the peptidase S10 family. In terms of tissue distribution, expressed in seedlings and roots.

Its subcellular location is the secreted. Probable carboxypeptidase. The sequence is that of Serine carboxypeptidase-like 1 (SCPL1) from Arabidopsis thaliana (Mouse-ear cress).